The primary structure comprises 313 residues: MDAQAKKKAMFRSKLNAKKKDTRIDSPLVRYNESDQPVCRVCNVVLKSESLWDVHQASRKHHEAIDSLKASAAGVQRGSKPAETRPTKIEALAKSSNSQTSSGLPPNFFENREPARAEVEPAKSKNLEQSKHTIGSETNKSKGPLPAGFFDNQKTDSSNTKTTSEPKQSQTQTTGPETKPMVNGNLPTGFFDNKEADLLAHGIKLVKPDIKDEYKEFEKLIQDDLQVVDSRMEEEEVDAAETIEEEEQREQRSYKEKVEILKRKKMELKAARLAKRSKTSEGSVKKPKKTEEESPSDEEDDEDSAVDWRAQHL.

A Nuclear localization signal 1 motif is present at residues 5 to 12 (AKKKAMFR). The segment at 39-61 (CRVCNVVLKSESLWDVHQASRKH) adopts a C2H2-type zinc-finger fold. Basic and acidic residues predominate over residues 115 to 131 (ARAEVEPAKSKNLEQSK). Disordered regions lie at residues 115–189 (ARAE…LPTG), 232–254 (MEEE…QRSY), and 271–313 (ARLA…AQHL). Polar residues predominate over residues 155–176 (TDSSNTKTTSEPKQSQTQTTGP). Residues 232–248 (MEEEEVDAAETIEEEEQ) are compositionally biased toward acidic residues. The stretch at 232 to 271 (MEEEEVDAAETIEEEEQREQRSYKEKVEILKRKKMELKAA) forms a coiled coil. Residues 274 to 281 (AKRSKTSE) carry the Nuclear localization signal 2 motif. Positions 293–305 (ESPSDEEDDEDSA) are enriched in acidic residues.

In terms of tissue distribution, mostly expressed in siliques and, to a lower extent, in roots. Barely deteclable in leaves and stems.

It localises to the nucleus. The protein localises to the cytoplasm. Functionally, essential for breaking seed dormancy before seed germination. Prevents reactive oxygen species (ROS) accumulation in response to abscisic acid (ABA) and oxidative stress, probably by repressing the accumulation of ABA-induced ROS-scavenging enzymes (e.g. CSD3). In Arabidopsis thaliana (Mouse-ear cress), this protein is Protein ABA AND ROS SENSITIVE 1.